We begin with the raw amino-acid sequence, 796 residues long: Protein translocase subunit SecA 2 (796 aa).

Residues glutamine 84, 102–106, and aspartate 496 each bind ATP; that span reads GEGKT.

The protein belongs to the SecA family. In terms of assembly, monomer and homodimer. Part of the essential Sec protein translocation apparatus which comprises SecA, SecYEG and auxiliary proteins SecDF. Other proteins may also be involved.

It is found in the cell membrane. It localises to the cytoplasm. The enzyme catalyses ATP + H2O + cellular proteinSide 1 = ADP + phosphate + cellular proteinSide 2.. Its function is as follows. Part of the Sec protein translocase complex. Interacts with the SecYEG preprotein conducting channel. Has a central role in coupling the hydrolysis of ATP to the transfer of proteins into and across the cell membrane, serving as an ATP-driven molecular motor driving the stepwise translocation of polypeptide chains across the membrane. The polypeptide is Protein translocase subunit SecA 2 (Staphylococcus aureus (strain MRSA252)).